The primary structure comprises 375 residues: Anhydro-N-acetylmuramic acid kinase (375 aa).

Residue 13–20 (GTSMDGVD) coordinates ATP.

It belongs to the anhydro-N-acetylmuramic acid kinase family.

The catalysed reaction is 1,6-anhydro-N-acetyl-beta-muramate + ATP + H2O = N-acetyl-D-muramate 6-phosphate + ADP + H(+). It participates in amino-sugar metabolism; 1,6-anhydro-N-acetylmuramate degradation. Its pathway is cell wall biogenesis; peptidoglycan recycling. Functionally, catalyzes the specific phosphorylation of 1,6-anhydro-N-acetylmuramic acid (anhMurNAc) with the simultaneous cleavage of the 1,6-anhydro ring, generating MurNAc-6-P. Is required for the utilization of anhMurNAc either imported from the medium or derived from its own cell wall murein, and thus plays a role in cell wall recycling. This is Anhydro-N-acetylmuramic acid kinase from Pelagibacter ubique (strain HTCC1062).